The following is a 155-amino-acid chain: Ribosomal RNA large subunit methyltransferase H (155 aa).

S-adenosyl-L-methionine-binding positions include leucine 73, glycine 104, and 123 to 128 (ISKMTF).

This sequence belongs to the RNA methyltransferase RlmH family. Homodimer.

The protein resides in the cytoplasm. It catalyses the reaction pseudouridine(1915) in 23S rRNA + S-adenosyl-L-methionine = N(3)-methylpseudouridine(1915) in 23S rRNA + S-adenosyl-L-homocysteine + H(+). Functionally, specifically methylates the pseudouridine at position 1915 (m3Psi1915) in 23S rRNA. The sequence is that of Ribosomal RNA large subunit methyltransferase H from Francisella tularensis subsp. novicida (strain U112).